The following is a 160-amino-acid chain: uncharacterized protein (160 aa).

An RING-type zinc finger spans residues 8–46 (CAVCLDFFVEPCIIECGHSYCRFCIESHLNINEKCPLCR).

This is an uncharacterized protein from Caenorhabditis elegans.